The chain runs to 221 residues: Ribosomal RNA small subunit methyltransferase G (221 aa).

Residues G90, L95, 141 to 142 (VE), and R154 contribute to the S-adenosyl-L-methionine site.

It belongs to the methyltransferase superfamily. RNA methyltransferase RsmG family.

The protein localises to the cytoplasm. The catalysed reaction is guanosine(527) in 16S rRNA + S-adenosyl-L-methionine = N(7)-methylguanosine(527) in 16S rRNA + S-adenosyl-L-homocysteine. Its function is as follows. Specifically methylates the N7 position of guanine in position 527 of 16S rRNA. The polypeptide is Ribosomal RNA small subunit methyltransferase G (Polaromonas naphthalenivorans (strain CJ2)).